Consider the following 258-residue polypeptide: Indole-3-glycerol phosphate synthase 2 (258 aa).

Belongs to the TrpC family.

It carries out the reaction 1-(2-carboxyphenylamino)-1-deoxy-D-ribulose 5-phosphate + H(+) = (1S,2R)-1-C-(indol-3-yl)glycerol 3-phosphate + CO2 + H2O. It functions in the pathway amino-acid biosynthesis; L-tryptophan biosynthesis; L-tryptophan from chorismate: step 4/5. Its function is as follows. The function of the second trp operon in S.coelicolor is to produce tryptophan for the biosynthesis of calcium-dependent antibiotic (CDA). The sequence is that of Indole-3-glycerol phosphate synthase 2 (trpC2) from Streptomyces coelicolor (strain ATCC BAA-471 / A3(2) / M145).